Reading from the N-terminus, the 23-residue chain is Aurein-4.4 (23 aa).

Belongs to the frog skin active peptide (FSAP) family. Aurein subfamily. Expressed by the skin dorsal glands.

It is found in the secreted. Its function is as follows. Has no antimicrobial or anticancer activity. The polypeptide is Aurein-4.4 (Ranoidea aurea (Green and golden bell frog)).